We begin with the raw amino-acid sequence, 420 residues long: MNTSFTRKSHTFLPKLFFRKMSSSGAKEKPELQFPFLQDEDTVATLHECKTLFILRGLPGSGKSTLARLILEKYHDGTKMVSADAYKIIPGSRADFSEAYKRLDEDLAGYCRRDIRVLVLDDTNHERERLDQLFEMADQYQYQVVLVEPKTAWRLDCAQLKEKNQWQLSADDLKKLKPGLEKDFLPLYFGWFLTKKSSETLRKAGQVFLEELGNHKAFKKELRHFISGDEPKEKLELVSYFGKRPPGVLHCTTKFCDYGKAAGAEEYAQQEVVKRSYGKAFKLSISALFVTPKTAGAQVVLTDQELQLWPSDLDKPSASEGLPPGSRAHVTLGCAADVQPVQTGLDLLDILQQVKGGSQGEAVGELPRGKLYSLGKGRWMLSLTKKMEVKAIFTGYYGKGKPVPIHGSRKGGAMQICTII.

Ser9 carries the phosphoserine modification. Position 110 is a phosphotyrosine (Tyr110). Ser169, Ser227, and Ser239 each carry phosphoserine. Catalysis depends on His250, which acts as the Proton acceptor. Residue Thr252 coordinates substrate. His329 functions as the Proton donor in the catalytic mechanism. A substrate-binding site is contributed by Thr331. A Phosphoserine modification is found at Ser358. Cys417 carries the cysteine methyl ester modification. Cys417 is lipidated: S-farnesyl cysteine. A propeptide spans 418–420 (removed in mature form); it reads TII.

The protein belongs to the 2H phosphoesterase superfamily. CNPase family. In terms of assembly, exists as monomers and homodimers.

The protein localises to the membrane. Its subcellular location is the melanosome. It carries out the reaction a nucleoside 2',3'-cyclic phosphate + H2O = a nucleoside 2'-phosphate + H(+). Functionally, catalyzes the formation of 2'-nucleotide products from 2',3'-cyclic substrates. May participate in RNA metabolism in the myelinating cell, CNP is the third most abundant protein in central nervous system myelin. This is 2',3'-cyclic-nucleotide 3'-phosphodiesterase from Mus musculus (Mouse).